Reading from the N-terminus, the 83-residue chain is Mitotic-spindle organizing protein 1 (83 aa).

This sequence belongs to the MOZART1 family. In terms of assembly, part of the gamma-tubulin complex.

It is found in the cytoplasm. It localises to the cytoskeleton. The protein localises to the microtubule organizing center. Its subcellular location is the spindle pole body. In terms of biological role, required for gamma-tubulin complex recruitment to the microtubule organizing center (MTOC). This chain is Mitotic-spindle organizing protein 1, found in Botryotinia fuckeliana (strain B05.10) (Noble rot fungus).